The sequence spans 408 residues: Type II methyltransferase M.VspI (408 aa).

Belongs to the N(4)/N(6)-methyltransferase family.

It carries out the reaction a 2'-deoxyadenosine in DNA + S-adenosyl-L-methionine = an N(6)-methyl-2'-deoxyadenosine in DNA + S-adenosyl-L-homocysteine + H(+). Functionally, a gamma subtype methylase, recognizes the double-stranded sequence 5'-ATTAAT-3', methylates A-5 on both strands, and protects the DNA from cleavage by the VspI endonuclease. The protein is Type II methyltransferase M.VspI of Vibrio sp. (strain 343).